A 392-amino-acid chain; its full sequence is Ribonuclease D (392 aa).

One can recognise a 3'-5' exonuclease domain in the interval 12–178 (LIETTEALAA…PVYEGLRARL (167 aa)). In terms of domain architecture, HRDC spans 217 to 298 (NRRQLALVKA…ASTKAIPDAE (82 aa)).

The protein belongs to the RNase D family. It depends on a divalent metal cation as a cofactor.

The protein localises to the cytoplasm. The enzyme catalyses Exonucleolytic cleavage that removes extra residues from the 3'-terminus of tRNA to produce 5'-mononucleotides.. Its function is as follows. Exonuclease involved in the 3' processing of various precursor tRNAs. Initiates hydrolysis at the 3'-terminus of an RNA molecule and releases 5'-mononucleotides. In Acidiphilium cryptum (strain JF-5), this protein is Ribonuclease D.